Reading from the N-terminus, the 131-residue chain is Small ribosomal subunit protein uS8 (131 aa).

Belongs to the universal ribosomal protein uS8 family. As to quaternary structure, part of the 30S ribosomal subunit. Contacts proteins S5 and S12.

Functionally, one of the primary rRNA binding proteins, it binds directly to 16S rRNA central domain where it helps coordinate assembly of the platform of the 30S subunit. The sequence is that of Small ribosomal subunit protein uS8 from Paracidovorax citrulli (strain AAC00-1) (Acidovorax citrulli).